Reading from the N-terminus, the 419-residue chain is Pregnancy-specific beta-1-glycoprotein 4 (419 aa).

The first 34 residues, 1–34 (MGPLSAPPCTQRITWKGVLLTASLLNFWNPPTTA), serve as a signal peptide directing secretion. One can recognise an Ig-like V-type domain in the interval 35–144 (QVTIEAQPPK…TGHFTFTLHL (110 aa)). N-linked (GlcNAc...) asparagine glycosylation is found at Asn104, Asn111, Asn199, Asn268, Asn299, and Asn303. Ig-like C2-type domains follow at residues 147–234 (PKPS…VTLN), 237–327 (PKLS…VTLN), and 332–410 (PDLP…KSIT). 3 disulfides stabilise this stretch: Cys169–Cys217, Cys262–Cys310, and Cys354–Cys394.

Belongs to the immunoglobulin superfamily. CEA family.

The protein resides in the secreted. The chain is Pregnancy-specific beta-1-glycoprotein 4 (PSG4) from Homo sapiens (Human).